The following is a 709-amino-acid chain: MFSIPVSSKTVRLILVSLLLITLINILAAFQRSTLSSWFPSSRHIINKFTDLRLALSSQESVLRDEEGEIYSLVGYHHDFDSNLVVVQKQYLLEKTPNEDTTEHFWNFLQSNFETKSEYDLNLIDGYNYKKLIKHLNEQNELQLSHSFVEQYKMENQFIQSFQNFFVQLIDTIEDCKPDLDPINNDNHYPNGDKIVKYYELRNKIPSENMKQFNIERLIHRNGRIPIYGGHLREQYKDELIRNKEFLSMYLTLSDSEISALKKSHTKFLETMMENWPENLFKFNKFNNFMKGDGIVYLGGGKYNQLVLLSIKILRENGSRLPVEVIIPYKNDYDIQFCDRVLPTLNGKCKLMTDYLPQTFVDKISGFQLKNIALLISSFERILYLDADNIPIRNPDVLFTNAPFTTKHLVVWPDLWRRSTSPHYYTIAGIEVDPNFKVRNSYVDGDERGKYTDSMYYSYHDCKGSIPEASSETGQLLINKKIHFQTLILAMYYNYYGPDYYYPLFSQGAAGEGDKETFIAAAHKLDLPYYQVGEFNREFGPINDNTRKHEFYGMGQYDPIIDYYMSTITTTQKDTKKKINYNSPLPEKYAANDEDDTCSNYDFHLFQSSSLFFLHANWPKYYIEKLFLYSYDEDRGPVTNDGDKRRLYGNELKKELGGYDFELNIMKNLHWCFCEEPLIDLIGIPVVGSKTRTDVCIAIKNHIEFLEIS.

Residues 1–9 (MFSIPVSSK) are Cytoplasmic-facing. The helical transmembrane segment at 10 to 30 (TVRLILVSLLLITLINILAAF) threads the bilayer. Over 31–709 (QRSTLSSWFP…KNHIEFLEIS (679 aa)) the chain is Extracellular. Asn-317 carries N-linked (GlcNAc...) asparagine glycosylation.

This sequence belongs to the MNN1/MNT family.

Its subcellular location is the golgi apparatus membrane. It participates in protein modification; protein glycosylation. Functionally, alpha-1,2-mannosyltransferase required for cell wall integrity. Responsible for addition of the first alpha-1,2-linked mannose to form the branches on the mannan backbone of oligosaccharides. Addition of alpha-1,2-mannose is required for stabilization of the alpha-1,6-mannose backbone and hence regulates mannan fibril length; and is important for both immune recognition and virulence. This chain is Alpha-1,2-mannosyltransferase MNN24 (MNN24), found in Candida albicans (strain SC5314 / ATCC MYA-2876) (Yeast).